We begin with the raw amino-acid sequence, 632 residues long: Probable electron transfer flavoprotein-ubiquinone oxidoreductase, mitochondrial (632 aa).

Residue V93 to I107 coordinates FAD. [4Fe-4S] cluster is bound by residues C575, C601, C604, and C607. Residues K592–P621 enclose the 4Fe-4S ferredoxin-type domain.

This sequence belongs to the ETF-QO/FixC family. Requires [4Fe-4S] cluster as cofactor. FAD is required as a cofactor.

The protein localises to the mitochondrion inner membrane. The catalysed reaction is a ubiquinone + reduced [electron-transfer flavoprotein] = a ubiquinol + oxidized [electron-transfer flavoprotein] + H(+). In terms of biological role, accepts electrons from ETF and reduces ubiquinone. This Schizosaccharomyces pombe (strain 972 / ATCC 24843) (Fission yeast) protein is Probable electron transfer flavoprotein-ubiquinone oxidoreductase, mitochondrial.